The chain runs to 182 residues: Flavodoxin (182 aa).

The Flavodoxin-like domain maps to 4–173 (IGLFFGSDTG…RLKGWLSLIA (170 aa)).

Belongs to the flavodoxin family. The cofactor is FMN.

Its function is as follows. Low-potential electron donor to a number of redox enzymes. NifF is the electron donor to nitrogenase. In Rhodobacter capsulatus (strain ATCC BAA-309 / NBRC 16581 / SB1003), this protein is Flavodoxin (nifF).